Here is a 41-residue protein sequence, read N- to C-terminus: uncharacterized protein (41 aa).

This is an uncharacterized protein from Rickettsia prowazekii (strain Madrid E).